A 103-amino-acid polypeptide reads, in one-letter code: Large ribosomal subunit protein bL21 (103 aa).

It belongs to the bacterial ribosomal protein bL21 family. In terms of assembly, part of the 50S ribosomal subunit. Contacts protein L20.

Functionally, this protein binds to 23S rRNA in the presence of protein L20. The sequence is that of Large ribosomal subunit protein bL21 from Pseudoalteromonas atlantica (strain T6c / ATCC BAA-1087).